The chain runs to 289 residues: Xyloglucan endotransglucosylase/hydrolase protein 15 (289 aa).

An N-terminal signal peptide occupies residues 1-25; that stretch reads MGPSSSLTTIVATVLLVTLFGSAYA. In terms of domain architecture, GH16 spans 26 to 216; that stretch reads SNFFDEFDLT…WSKAPFTAYY (191 aa). The active-site Nucleophile is the Glu-102. Glu-106 acts as the Proton donor in catalysis. Position 106 (Glu-106) interacts with xyloglucan. A glycan (N-linked (GlcNAc...) asparagine) is linked at Asn-110. Xyloglucan contacts are provided by residues 119–121, 129–131, 195–196, and Gly-200; these read HTN, DRE, and DW. Disulfide bonds link Cys-224-Cys-230 and Cys-270-Cys-284. Arg-275 contributes to the xyloglucan binding site.

This sequence belongs to the glycosyl hydrolase 16 family. XTH group 2 subfamily. Post-translationally, contains at least one intrachain disulfide bond essential for its enzymatic activity. In terms of tissue distribution, strongly expressed in roots, hypocotyls and cotyledons. Aslo detected in inflorescence stems and in the carpels and styles in flowers.

The protein resides in the secreted. It is found in the cell wall. The protein localises to the extracellular space. Its subcellular location is the apoplast. The enzyme catalyses breaks a beta-(1-&gt;4) bond in the backbone of a xyloglucan and transfers the xyloglucanyl segment on to O-4 of the non-reducing terminal glucose residue of an acceptor, which can be a xyloglucan or an oligosaccharide of xyloglucan.. It carries out the reaction xyloglucan + H2O = xyloglucan oligosaccharides.. In terms of biological role, catalyzes xyloglucan endohydrolysis (XEH) and/or endotransglycosylation (XET). Cleaves and religates xyloglucan polymers, an essential constituent of the primary cell wall, and thereby participates in cell wall construction of growing tissues. Has a high XET activity, but little or no XEH activity in vitro. Acceptor preferences are XXXGol &gt; XLLGol = XLFGol &gt; XXLGol &gt; XXFGol. This chain is Xyloglucan endotransglucosylase/hydrolase protein 15, found in Arabidopsis thaliana (Mouse-ear cress).